A 233-amino-acid polypeptide reads, in one-letter code: Small ribosomal subunit protein uS3 (233 aa).

In terms of domain architecture, KH type-2 spans 39–108 (IRTALFKLLK…KLIVNVRVIE (70 aa)).

This sequence belongs to the universal ribosomal protein uS3 family. In terms of assembly, part of the 30S ribosomal subunit. Forms a tight complex with proteins S10 and S14.

Its function is as follows. Binds the lower part of the 30S subunit head. Binds mRNA in the 70S ribosome, positioning it for translation. The sequence is that of Small ribosomal subunit protein uS3 from Mycoplasma mycoides subsp. mycoides SC (strain CCUG 32753 / NCTC 10114 / PG1).